The sequence spans 127 residues: Fluoride-specific ion channel FluC (127 aa).

The next 4 membrane-spanning stretches (helical) occupy residues 3–23 (ALLLVGAGGAAGAVARYLLGV), 36–56 (GTFAANILGGFLMGLLAGGLA), 72–92 (VGALGGFTTFSAYSLEVALMI), and 101–121 (FAYSLGSVALAVAALFAGLLL). Residues G76 and T79 each coordinate Na(+).

It belongs to the fluoride channel Fluc/FEX (TC 1.A.43) family.

Its subcellular location is the cell inner membrane. The catalysed reaction is fluoride(in) = fluoride(out). Its activity is regulated as follows. Na(+) is not transported, but it plays an essential structural role and its presence is essential for fluoride channel function. Functionally, fluoride-specific ion channel. Important for reducing fluoride concentration in the cell, thus reducing its toxicity. This is Fluoride-specific ion channel FluC from Phenylobacterium zucineum (strain HLK1).